Consider the following 465-residue polypeptide: uncharacterized protein (465 aa).

The chain crosses the membrane as a helical span at residues 56–76 (ILYMIIFAIFGLLPFLIALIF). Residues 177–198 (KFNKSKKSNKINDKTPILNNNN) are disordered. A helical transmembrane segment spans residues 273 to 293 (LIFLLVSTILLIALIGFILII). The interval 411–449 (NNYNNSNNNNNSNNSNSNNNNNNNNNNNNYNNNNYNNNN) is disordered.

It is found in the membrane. This is an uncharacterized protein from Dictyostelium discoideum (Social amoeba).